We begin with the raw amino-acid sequence, 339 residues long: Dual specificity protein phosphatase 12 (339 aa).

Methionine 1 carries the N-acetylmethionine modification. Residues 1-22 (MLEVQSSNHGCERQAPTTSPAS) show a composition bias toward polar residues. The tract at residues 1 to 25 (MLEVQSSNHGCERQAPTTSPASSAG) is disordered. Residues 26-170 (HAVEVRPGLY…LKLYEAMGHE (145 aa)) enclose the Tyrosine-protein phosphatase domain. Catalysis depends on cysteine 114, which acts as the Phosphocysteine intermediate. 115–120 (HAGVSR) serves as a coordination point for substrate. Serine 334 carries the phosphoserine modification.

This sequence belongs to the protein-tyrosine phosphatase family. Non-receptor class dual specificity subfamily. As to quaternary structure, monomer. The cofactor is Zn(2+).

It localises to the nucleus. Its subcellular location is the cytoplasm. The protein resides in the cytosol. The catalysed reaction is O-phospho-L-tyrosyl-[protein] + H2O = L-tyrosyl-[protein] + phosphate. It carries out the reaction O-phospho-L-seryl-[protein] + H2O = L-seryl-[protein] + phosphate. The enzyme catalyses O-phospho-L-threonyl-[protein] + H2O = L-threonyl-[protein] + phosphate. In terms of biological role, dual specificity phosphatase; can dephosphorylate both phosphotyrosine and phosphoserine or phosphothreonine residues. Can dephosphorylate glucokinase (in vitro). Has phosphatase activity with the synthetic substrate 6,8-difluoro-4-methylumbelliferyl phosphate and other in vitro substrates. This Rattus norvegicus (Rat) protein is Dual specificity protein phosphatase 12 (Dusp12).